The sequence spans 101 residues: Nucleoid-associated protein Cla_0113 (101 aa).

Belongs to the YbaB/EbfC family. As to quaternary structure, homodimer.

The protein resides in the cytoplasm. It localises to the nucleoid. Its function is as follows. Binds to DNA and alters its conformation. May be involved in regulation of gene expression, nucleoid organization and DNA protection. In Campylobacter lari (strain RM2100 / D67 / ATCC BAA-1060), this protein is Nucleoid-associated protein Cla_0113.